We begin with the raw amino-acid sequence, 123 residues long: Small ribosomal subunit protein uS12 (123 aa).

Belongs to the universal ribosomal protein uS12 family. As to quaternary structure, part of the 30S ribosomal subunit. Contacts proteins S8 and S17. May interact with IF1 in the 30S initiation complex.

Its function is as follows. With S4 and S5 plays an important role in translational accuracy. In terms of biological role, interacts with and stabilizes bases of the 16S rRNA that are involved in tRNA selection in the A site and with the mRNA backbone. Located at the interface of the 30S and 50S subunits, it traverses the body of the 30S subunit contacting proteins on the other side and probably holding the rRNA structure together. The combined cluster of proteins S8, S12 and S17 appears to hold together the shoulder and platform of the 30S subunit. The protein is Small ribosomal subunit protein uS12 of Corynebacterium diphtheriae (strain ATCC 700971 / NCTC 13129 / Biotype gravis).